Here is a 284-residue protein sequence, read N- to C-terminus: NAD/NADP-dependent indole-3-acetaldehyde reductase (284 aa).

Residue aspartate 49 coordinates NADPH. Catalysis depends on proton donor residues tyrosine 54 and histidine 109. Residues serine 143, glutamine 165, leucine 196, arginine 201, threonine 239, threonine 240, threonine 241, serine 242, lysine 243, and arginine 246 each coordinate NADPH.

This sequence belongs to the aldo/keto reductase family. In terms of assembly, monomer.

The protein resides in the cytoplasm. The protein localises to the nucleus. The catalysed reaction is indole-3-ethanol + NAD(+) = indole-3-acetaldehyde + NADH + H(+). It catalyses the reaction indole-3-ethanol + NADP(+) = indole-3-acetaldehyde + NADPH + H(+). In Schizosaccharomyces pombe (strain 972 / ATCC 24843) (Fission yeast), this protein is NAD/NADP-dependent indole-3-acetaldehyde reductase.